The following is a 241-amino-acid chain: tRNA (guanine-N(7)-)-methyltransferase (241 aa).

The span at 1–10 (MTESNETPNT) shows a compositional bias: polar residues. Positions 1–21 (MTESNETPNTPEAGDESKHRR) are disordered. Residues Glu-71, Glu-96, Asp-123, and Asp-146 each coordinate S-adenosyl-L-methionine. Asp-146 is an active-site residue. Residues Lys-150, Asp-182, and 219 to 222 (TKFE) contribute to the substrate site.

It belongs to the class I-like SAM-binding methyltransferase superfamily. TrmB family.

It carries out the reaction guanosine(46) in tRNA + S-adenosyl-L-methionine = N(7)-methylguanosine(46) in tRNA + S-adenosyl-L-homocysteine. It functions in the pathway tRNA modification; N(7)-methylguanine-tRNA biosynthesis. Functionally, catalyzes the formation of N(7)-methylguanine at position 46 (m7G46) in tRNA. This is tRNA (guanine-N(7)-)-methyltransferase from Pseudomonas fluorescens (strain SBW25).